Here is a 169-residue protein sequence, read N- to C-terminus: Photosystem I assembly protein Ycf3 (169 aa).

TPR repeat units lie at residues 35-68 (AFTY…EIDP), 72-105 (SYIL…NPSL), and 120-153 (GEQA…APNN).

It belongs to the Ycf3 family.

The protein resides in the plastid. It localises to the chloroplast thylakoid membrane. In terms of biological role, essential for the assembly of the photosystem I (PSI) complex. May act as a chaperone-like factor to guide the assembly of the PSI subunits. This chain is Photosystem I assembly protein Ycf3, found in Staurastrum punctulatum (Green alga).